Here is a 1182-residue protein sequence, read N- to C-terminus: Tyrosine-protein kinase ABL2 (1182 aa).

Disordered stretches follow at residues Met-1–Asn-47 and Glu-60–Tyr-80. Gly-2 is lipidated: N-myristoyl glycine. A CAP region spans residues Gly-2 to Glu-106. The segment covering Arg-20–Pro-30 has biased composition (low complexity). Ser-97 is subject to Phosphoserine. Positions Ser-107 to Ser-167 constitute an SH3 domain. Tyr-116, Tyr-161, Tyr-174, Tyr-185, Tyr-218, and Tyr-231 each carry phosphotyrosine. The 91-residue stretch at Trp-173–Ala-263 folds into the SH2 domain. Phosphotyrosine; by ABL1 and autocatalysis is present on Tyr-261. Phosphotyrosine; by autocatalysis is present on Tyr-272. Ser-275 is subject to Phosphoserine. The Protein kinase domain maps to Ile-288–Phe-539. Position 294–302 (Leu-294–Val-302) interacts with ATP. Phosphotyrosine is present on residues Tyr-299 and Tyr-303. ATP-binding positions include Lys-317 and Glu-362 to Asn-368. The active-site Proton acceptor is the Asp-409. The short motif at Asp-427–Trp-451 is the Kinase activation loop element. Residue Tyr-439 is modified to Phosphotyrosine; by autocatalysis and SRC-type Tyr-kinases. Tyr-459 is modified (phosphotyrosine). Tyr-568 bears the Phosphotyrosine; by autocatalysis mark. The segment at Ile-611–Glu-641 is disordered. Phosphoserine is present on residues Ser-620, Ser-631, and Ser-633. Asp-647 is subject to Phosphotyrosine. The disordered stretch occupies residues Ser-654 to Glu-674. Ser-655 is modified (phosphoserine). The Nuclear localization signal signature appears at Lys-658 to Arg-660. Ala-662 and Arg-668 each carry phosphotyrosine. Phosphoserine occurs at positions 669, 670, and 671. A phosphotyrosine mark is found at Tyr-683 and Tyr-718. The residue at position 683 (Tyr-683) is a Phosphotyrosine; by autocatalysis. Residues Ser-694 to Lys-930 are F-actin-binding. Residues Leu-763–Gln-794 form a disordered region. Lys-776 bears the N6-acetyllysine mark. Residues Arg-780 to Leu-791 are compositionally biased toward polar residues. Ser-783 is modified (phosphoserine). Thr-800 bears the Phosphothreonine mark. The segment covering Arg-807–Glu-823 has biased composition (polar residues). The segment at Arg-807–Lys-851 is disordered. A phosphoserine mark is found at Ser-817 and Ser-820. Residues Asn-825–Lys-849 show a composition bias toward basic and acidic residues. 2 positions are modified to phosphoserine: Ser-915 and Ser-936. The interval His-964 to Lys-1024 is disordered. A compositionally biased stretch (polar residues) spans Thr-1010 to Gln-1019. Residues Glu-1020–Arg-1182 are F-actin-binding.

Belongs to the protein kinase superfamily. Tyr protein kinase family. ABL subfamily. As to quaternary structure, interacts with PSMA7. Interacts with CTTN. Found in a complex with ABL1, ABL2, CRK and UNC119; leading to the inhibition of CRK phosphorylation by ABL kinases. Mg(2+) is required as a cofactor. Requires Mn(2+) as cofactor. In terms of processing, phosphorylated at Tyr-261 by ABL1 in response to oxidative stress. Phosphorylated by PDGFRB. Post-translationally, polyubiquitinated. Polyubiquitination of ABL2 leads to degradation. As to expression, widely expressed.

It localises to the cytoplasm. The protein resides in the cytoskeleton. It carries out the reaction L-tyrosyl-[protein] + ATP = O-phospho-L-tyrosyl-[protein] + ADP + H(+). Stabilized in the inactive form by an association between the SH3 domain and the SH2-TK linker region, interactions of the N-terminal cap, and contributions from an N-terminal myristoyl group and phospholipids. Activated by autophosphorylation as well as by SRC-family kinase-mediated phosphorylation. Activated by RIN1 binding to the SH2 and SH3 domains. Inhibited by imatinib mesylate (Gleevec) which is used for the treatment of chronic myeloid leukemia (CML). Phosphatidylinositol 4,5-bisphosphate (PIP2), a highly abundant phosphoinositide known to regulate cytoskeletal and membrane proteins, inhibits the tyrosine kinase activity. In terms of biological role, non-receptor tyrosine-protein kinase that plays an ABL1-overlapping role in key processes linked to cell growth and survival such as cytoskeleton remodeling in response to extracellular stimuli, cell motility and adhesion and receptor endocytosis. Coordinates actin remodeling through tyrosine phosphorylation of proteins controlling cytoskeleton dynamics like MYH10 (involved in movement); CTTN (involved in signaling); or TUBA1 and TUBB (microtubule subunits). Binds directly F-actin and regulates actin cytoskeletal structure through its F-actin-bundling activity. Involved in the regulation of cell adhesion and motility through phosphorylation of key regulators of these processes such as CRK, CRKL, DOK1 or ARHGAP35. Adhesion-dependent phosphorylation of ARHGAP35 promotes its association with RASA1, resulting in recruitment of ARHGAP35 to the cell periphery where it inhibits RHO. Phosphorylates multiple receptor tyrosine kinases like PDGFRB and other substrates which are involved in endocytosis regulation such as RIN1. In brain, may regulate neurotransmission by phosphorylating proteins at the synapse. ABL2 also acts as a regulator of multiple pathological signaling cascades during infection. Pathogens can highjack ABL2 kinase signaling to reorganize the host actin cytoskeleton for multiple purposes, like facilitating intracellular movement and host cell exit. Finally, functions as its own regulator through autocatalytic activity as well as through phosphorylation of its inhibitor, ABI1. Positively regulates chemokine-mediated T-cell migration, polarization, and homing to lymph nodes and immune-challenged tissues, potentially via activation of NEDD9/HEF1 and RAP1. This chain is Tyrosine-protein kinase ABL2 (ABL2), found in Homo sapiens (Human).